We begin with the raw amino-acid sequence, 143 residues long: Ribonuclease HI (143 aa).

The 136-residue stretch at 1 to 136 (MQEIEIFCDG…CDSLAKLEAQ (136 aa)) folds into the RNase H type-1 domain. D9, E47, D69, and D128 together coordinate Mg(2+).

This sequence belongs to the RNase H family. In terms of assembly, monomer. It depends on Mg(2+) as a cofactor.

Its subcellular location is the cytoplasm. The catalysed reaction is Endonucleolytic cleavage to 5'-phosphomonoester.. Its function is as follows. Endonuclease that specifically degrades the RNA of RNA-DNA hybrids. In Helicobacter pylori (strain ATCC 700392 / 26695) (Campylobacter pylori), this protein is Ribonuclease HI (rnhA).